The sequence spans 314 residues: Three-prime repair exonuclease 1 (314 aa).

The Mg(2+) site is built by aspartate 18 and glutamate 20. 20–21 is a binding site for substrate; that stretch reads EA. At serine 78 the chain carries Phosphoserine. Tyrosine 129 contributes to the substrate binding site. Serine 167 carries the phosphoserine modification. Histidine 195 (proton donor/acceptor) is an active-site residue. Aspartate 200 is a binding site for Mg(2+). A substrate-binding site is contributed by aspartate 200. The tract at residues 236 to 314 is necessary for endoplasmic reticulum localization; it reads TASARTKPRP…YGLSLATPGE (79 aa). The tract at residues 240–278 is disordered; the sequence is RTKPRPSAVTTTAHLATTRNTSPSLGESRGTKDLPPVKD. The interval 243–314 is interaction with UBQLN1; sequence PRPSAVTTTA…YGLSLATPGE (72 aa). Low complexity predominate over residues 247 to 260; the sequence is AVTTTAHLATTRNT. Position 261 is a phosphoserine (serine 261). Positions 281 to 314 are necessary for cytoplasmic retention; sequence ALSREGLLAPLGLLAILTLAVATLYGLSLATPGE.

The protein belongs to the exonuclease superfamily. TREX family. Homodimer. Interacts (via proline-rich region) with TCERG1/CA150 (via the second WW domain). Component of the SET complex, composed of at least ANP32A, APEX1, HMGB2, NME1, SET and TREX1. Within this complex, directly interacts with SET; this interaction does not result in TREX1 inhibition. Also interacts with NME1, but only following translocation to the nucleus. Directly interacts with UBQLN1 (via ubiquitin-like domain); the interaction may control TREX1 subcellular location. It depends on Mg(2+) as a cofactor. Post-translationally, ubiquitinated, but not targeted to proteasomal degradation. Ubiquitination may be important for interaction with UBQLN1. In terms of tissue distribution, detected in thymus, spleen, liver, brain, heart, small intestine and colon.

Its subcellular location is the nucleus. The protein resides in the cytoplasm. The protein localises to the cytosol. It localises to the endoplasmic reticulum membrane. It carries out the reaction Exonucleolytic cleavage in the 3'- to 5'-direction to yield nucleoside 5'-phosphates.. Its function is as follows. Major cellular 3'-to-5' DNA exonuclease which digests single-stranded DNA (ssDNA) and double-stranded DNA (dsDNA) with mismatched 3' termini. Prevents cell-intrinsic initiation of autoimmunity. Acts by metabolizing DNA fragments from endogenous retroelements, including L1, LTR and SINE elements. Plays a key role in degradation of DNA fragments at cytosolic micronuclei arising from genome instability: its association with the endoplasmic reticulum membrane directs TREX1 to ruptured micronuclei, leading to micronuclear DNA degradation. Micronuclear DNA degradation is required to limit CGAS activation and subsequent inflammation. Unless degraded, these DNA fragments accumulate in the cytosol and activate the cGAS-STING innate immune signaling, leading to the production of type I interferon. Prevents chronic ATM-dependent checkpoint activation, by processing ssDNA polynucleotide species arising from the processing of aberrant DNA replication intermediates. Inefficiently degrades oxidized DNA, such as that generated upon antimicrobial reactive oxygen production or upon absorption of UV light. During GZMA-mediated cell death, contributes to DNA damage in concert with NME1. NME1 nicks one strand of DNA and TREX1 removes bases from the free 3' end to enhance DNA damage and prevent DNA end reannealing and rapid repair. This chain is Three-prime repair exonuclease 1, found in Homo sapiens (Human).